The sequence spans 780 residues: Reticulon-1 (780 aa).

4 disordered regions span residues 1–76, 128–176, 201–223, and 293–576; these read MAAP…VAME, QKEN…AEST, RPQE…LDFK, and MTAT…IPGP. 2 positions are modified to phosphoserine: Ser13 and Ser70. Ser327 is subject to Phosphoserine. Residues 328–341 show a composition bias toward low complexity; that stretch reads PGSVTPPSSGTEPS. Phosphoserine occurs at positions 350, 352, and 487. Basic and acidic residues predominate over residues 497-512; that stretch reads AIREETGSRATEERAP. Residues 593-780 enclose the Reticulon domain; it reads AIDLLYWRDI…KIPGAKRHAE (188 aa). Helical transmembrane passes span 607 to 627 and 709 to 729; these read IVFG…VVSV and FAVL…LTLL.

As to quaternary structure, interacts with NDRG1. Interacts with BACE1. Interacts with TMEM33.

It localises to the endoplasmic reticulum membrane. The protein localises to the golgi apparatus membrane. Its function is as follows. Inhibits amyloid precursor protein processing, probably by blocking BACE1 activity. This chain is Reticulon-1 (Rtn1), found in Mus musculus (Mouse).